We begin with the raw amino-acid sequence, 95 residues long: Small ribosomal subunit protein bS6 (95 aa).

The protein belongs to the bacterial ribosomal protein bS6 family.

In terms of biological role, binds together with bS18 to 16S ribosomal RNA. The chain is Small ribosomal subunit protein bS6 from Clostridium beijerinckii (strain ATCC 51743 / NCIMB 8052) (Clostridium acetobutylicum).